The chain runs to 822 residues: Dextranase (822 aa).

A signal peptide spans 1–38; that stretch reads MTVNLTLQHASEIIGQDNVDLTLAAGASAKVSNLTVAS. Disordered stretches follow at residues 607–669 and 683–788; these read EPVT…VDEL and ETAH…ETTS. Residues 619 to 636 are compositionally biased toward low complexity; that stretch reads NTVTSEASSETAKSENTT. The span at 693-705 shows a compositional bias: polar residues; the sequence is SVSNTDQGTVASD. The span at 706–761 shows a compositional bias: low complexity; it reads SITTPASEAASTAASTVSSEVSESVTVSSEPSETENSSEASTSESATPTTTAISES. A compositionally biased stretch (polar residues) spans 771–788; that stretch reads LTESESQASTSLVSETTS.

Belongs to the glycosyl hydrolase 66 family.

The enzyme catalyses Endohydrolysis of (1-&gt;6)-alpha-D-glucosidic linkages in dextran.. This chain is Dextranase (dex), found in Streptococcus salivarius.